The primary structure comprises 130 residues: Small ribosomal subunit protein uS8z/uS8w (130 aa).

Belongs to the universal ribosomal protein uS8 family.

It is found in the cytoplasm. The chain is Small ribosomal subunit protein uS8z/uS8w (RPS15AA) from Arabidopsis thaliana (Mouse-ear cress).